Reading from the N-terminus, the 244-residue chain is Glutathione-independent glyoxalase hsp3101 (244 aa).

Catalysis depends on residues cysteine 139, histidine 140, and glutamate 173.

It belongs to the peptidase C56 family. HSP31-like subfamily.

The protein resides in the cytoplasm. Its subcellular location is the nucleus. It catalyses the reaction methylglyoxal + H2O = (R)-lactate + H(+). In terms of biological role, catalyzes the conversion of methylglyoxal (MG) to D-lactate in a single glutathione (GSH)-independent step. May play a role in detoxifying endogenously produced glyoxals. Involved in protection against reactive oxygen species (ROS). The polypeptide is Glutathione-independent glyoxalase hsp3101 (Schizosaccharomyces pombe (strain 972 / ATCC 24843) (Fission yeast)).